The sequence spans 417 residues: Serine--tRNA ligase (417 aa).

224–226 (TSE) provides a ligand contact to L-serine. ATP is bound by residues 255–257 (RRE) and Val-271. Glu-278 serves as a coordination point for L-serine. Position 342-345 (342-345 (ELTS)) interacts with ATP. Thr-377 serves as a coordination point for L-serine.

Belongs to the class-II aminoacyl-tRNA synthetase family. Type-1 seryl-tRNA synthetase subfamily. As to quaternary structure, homodimer. The tRNA molecule binds across the dimer.

Its subcellular location is the cytoplasm. The enzyme catalyses tRNA(Ser) + L-serine + ATP = L-seryl-tRNA(Ser) + AMP + diphosphate + H(+). It catalyses the reaction tRNA(Sec) + L-serine + ATP = L-seryl-tRNA(Sec) + AMP + diphosphate + H(+). The protein operates within aminoacyl-tRNA biosynthesis; selenocysteinyl-tRNA(Sec) biosynthesis; L-seryl-tRNA(Sec) from L-serine and tRNA(Sec): step 1/1. Its function is as follows. Catalyzes the attachment of serine to tRNA(Ser). Is also able to aminoacylate tRNA(Sec) with serine, to form the misacylated tRNA L-seryl-tRNA(Sec), which will be further converted into selenocysteinyl-tRNA(Sec). This is Serine--tRNA ligase from Mycobacterium leprae (strain TN).